The following is a 285-amino-acid chain: Pantothenate synthetase (285 aa).

An ATP-binding site is contributed by 30 to 37 (MGNLHDGH). Histidine 37 acts as the Proton donor in catalysis. Glutamine 61 lines the (R)-pantoate pocket. A beta-alanine-binding site is contributed by glutamine 61. Position 148-151 (148-151 (GEKD)) interacts with ATP. A (R)-pantoate-binding site is contributed by glutamine 154. 185-188 (RSSR) contacts ATP.

The protein belongs to the pantothenate synthetase family. In terms of assembly, homodimer.

Its subcellular location is the cytoplasm. It catalyses the reaction (R)-pantoate + beta-alanine + ATP = (R)-pantothenate + AMP + diphosphate + H(+). It participates in cofactor biosynthesis; (R)-pantothenate biosynthesis; (R)-pantothenate from (R)-pantoate and beta-alanine: step 1/1. Catalyzes the condensation of pantoate with beta-alanine in an ATP-dependent reaction via a pantoyl-adenylate intermediate. The sequence is that of Pantothenate synthetase from Alcanivorax borkumensis (strain ATCC 700651 / DSM 11573 / NCIMB 13689 / SK2).